We begin with the raw amino-acid sequence, 488 residues long: MGSRFVSNEQKPHVVCVPYPAQGHINPMMKVAKLLHVKGFHVTFVNTVYNHNRLLRSRGANALDGLPSFQFESIPDGLPETGVDATQDIPALSESTTKNCLVPFKKLLQRIVTREDVPPVSCIVSDGSMSFTLDVAEELGVPEIHFWTTSACGFMAYLHFYLFIEKGLCPVKDASCLTKEYLDTVIDWIPSMNNVKLKDIPSFIRTTNPNDIMLNFVVREACRTKRASAIILNTFDDLEHDIIQSMQSILPPVYPIGPLHLLVNREIEEDSEIGRMGSNLWKEETECLGWLNTKSRNSVVYVNFGSITIMTTAQLLEFAWGLAATGKEFLWVMRPDSVAGEEAVIPKEFLAETADRRMLTSWCPQEKVLSHPAVGGFLTHCGWNSTLESLSCGVPMVCWPFFAEQQTNCKFSCDEWEVGIEIGGDVKRGEVEAVVRELMDGEKGKKMREKAVEWRRLAEKATKLPCGSSVINFETIVNKVLLGKIPNT.

Residues serine 306, 363 to 365, 380 to 388, and 402 to 405 each bind UDP-alpha-D-glucose; these read CPQ, HCGWNSTLE, and FAEQ.

This sequence belongs to the UDP-glycosyltransferase family. In terms of tissue distribution, expressed in roots and flowers.

The polypeptide is UDP-glycosyltransferase 85A3 (UGT85A3) (Arabidopsis thaliana (Mouse-ear cress)).